The chain runs to 470 residues: 24-hydroxycholesterol 7-alpha-hydroxylase (470 aa).

The next 2 helical transmembrane spans lie at isoleucine 3–phenylalanine 23 and valine 270–isoleucine 290. Heme is bound at residue cysteine 415.

The protein belongs to the cytochrome P450 family. Requires heme as cofactor. As to expression, liver specific. Hepatic expression is sexually dimorphic (female &gt; male).

It is found in the endoplasmic reticulum membrane. The protein resides in the microsome membrane. The catalysed reaction is (24S)-hydroxycholesterol + reduced [NADPH--hemoprotein reductase] + O2 = (24S)-7alpha-dihydroxycholesterol + oxidized [NADPH--hemoprotein reductase] + H2O + H(+). The protein operates within steroid metabolism; cholesterol degradation. Its pathway is lipid metabolism; bile acid biosynthesis. Functionally, a cytochrome P450 monooxygenase involved in neural cholesterol clearance through bile acid synthesis. Catalyzes 7-alpha hydroxylation of (24S)-hydroxycholesterol, a neural oxysterol that is metabolized to bile acids in the liver. Mechanistically, uses molecular oxygen inserting one oxygen atom into a substrate, and reducing the second into a water molecule, with two electrons provided by NADPH via cytochrome P450 reductase (CPR; NADPH-ferrihemoprotein reductase). The sequence is that of 24-hydroxycholesterol 7-alpha-hydroxylase (Cyp39a1) from Mus musculus (Mouse).